Here is a 460-residue protein sequence, read N- to C-terminus: MNLGDTIVAIASAVVPNQGSIGIVRLSGAAALPIARQLFQDPGQQTWESHRILYGYVRHPQTQTIVDEALLLLMLAPRSFTAEDVVEFHCHGGIIPVQQVLQLCLGAGARLATPGEFTLRAFLNGRIDLTQAESVAELVGAKSPQSAQVALAGIQGKLAQPIQQLRGQCLDILAEVEARIDFEDDLPPLDEPQIQRDLTQVLEKVAQILQTSDRGELLRTGLKVAIVGRPNVGKSSLLNAWSRSDRAIVTDLPGTTRDVVESQLVVQGIPVQVLDTAGIRDTEDAVEKIGVARSLAASQQADLILFTIDAAVGWTAADQEIFQRIVATKANQPLILILNKIDIGQPEAIEIPPQVQGVVKTAAAQHQGVDELETAIANLVQAGKVGAADLDFAINQRQAAALAQAQQALIQVRETIAQGLPLDFWTIDLRSAIQALGEITGEGVTESVLDRIFSRFCIGK.

(6S)-5-formyl-5,6,7,8-tetrahydrofolate contacts are provided by R25, E87, and R126. Residues 221–381 enclose the TrmE-type G domain; the sequence is GLKVAIVGRP…LETAIANLVQ (161 aa). N231 serves as a coordination point for K(+). Residues 231–236, 250–256, and 275–278 contribute to the GTP site; these read NVGKSS, TDLPGTT, and DTAG. Residue S235 participates in Mg(2+) binding. T250, L252, and T255 together coordinate K(+). T256 contributes to the Mg(2+) binding site. Residue K460 coordinates (6S)-5-formyl-5,6,7,8-tetrahydrofolate.

Belongs to the TRAFAC class TrmE-Era-EngA-EngB-Septin-like GTPase superfamily. TrmE GTPase family. Homodimer. Heterotetramer of two MnmE and two MnmG subunits. The cofactor is K(+).

Its subcellular location is the cytoplasm. In terms of biological role, exhibits a very high intrinsic GTPase hydrolysis rate. Involved in the addition of a carboxymethylaminomethyl (cmnm) group at the wobble position (U34) of certain tRNAs, forming tRNA-cmnm(5)s(2)U34. The chain is tRNA modification GTPase MnmE from Picosynechococcus sp. (strain ATCC 27264 / PCC 7002 / PR-6) (Agmenellum quadruplicatum).